We begin with the raw amino-acid sequence, 250 residues long: MADS-box transcription factor 47 (250 aa).

Gly residues predominate over residues 1 to 10; the sequence is MAGGGGGGGR. 2 disordered regions span residues 1 to 20 and 196 to 250; these read MAGGGGGGGRGEGEGRAATG and SRME…FSSK. A compositionally biased stretch (basic and acidic residues) spans 11 to 20; the sequence is GEGEGRAATG. An MADS-box domain is found at 20-80; the sequence is GKRERIAIRR…GKLFQFASTS (61 aa). Positions 106-198 constitute a K-box domain; it reads QGEDSSTCAR…QLQVSRMSRM (93 aa). The segment covering 214-224 has biased composition (polar residues); sequence GQSSESVTNAS.

May interact with MADS18. As to expression, expressed in roots, shoots and developing panicles. Expressed in mature stems and leaves, flowering panicles, developing seeds, and mature seeds.

It is found in the nucleus. Its function is as follows. Transcription factor that modulates expressions of multiple genes involved in cell signaling and gene transcription. Plays a negative regulatory role in brassinosteroid signaling. This is MADS-box transcription factor 47 from Oryza sativa subsp. japonica (Rice).